The following is a 241-amino-acid chain: MPVASLSLFRFDGTSSLPWVISQMILSRRPLNDEPRVKFYKLCGSGTGEGFTPKPNWRVWAIMAAFDTEADARDVTANHPVWKRWRAHAAETLVLHLQPLSARGTWGGVNPFLPEQVAEPSPDEPVVALTRAAIKPHKANAFWSRVPKISEKVGEDQNLMFKIGIGEIPLFHQVTFSIWPDVAKMNAFARGDTPHGKAIRAAREEGWFTEELYARFRLLGTEGSWMGKDPLASKVLERETA.

This sequence belongs to the CrtA family. It depends on heme as a cofactor.

It catalyses the reaction spheroidene + 4 reduced [2Fe-2S]-[ferredoxin] + 2 O2 + 4 H(+) = spheroiden-2-one + 4 oxidized [2Fe-2S]-[ferredoxin] + 3 H2O. The catalysed reaction is spirilloxanthin + 4 reduced [2Fe-2S]-[ferredoxin] + 2 O2 + 4 H(+) = 2-oxospirilloxanthin + 4 oxidized [2Fe-2S]-[ferredoxin] + 3 H2O. The enzyme catalyses 2-oxospirilloxanthin + 4 reduced [2Fe-2S]-[ferredoxin] + 2 O2 + 4 H(+) = 2,2'-dioxospirilloxanthin + 4 oxidized [2Fe-2S]-[ferredoxin] + 3 H2O. It carries out the reaction spheroidene + 2 reduced [2Fe-2S]-[ferredoxin] + O2 + 2 H(+) = 2-hydroxyspheroidene + 2 oxidized [2Fe-2S]-[ferredoxin] + H2O. It catalyses the reaction 2-hydroxyspheroidene + 2 reduced [2Fe-2S]-[ferredoxin] + O2 + 2 H(+) = 2,2-dihydroxyspheroidene + 2 oxidized [2Fe-2S]-[ferredoxin] + H2O. The catalysed reaction is 2,2-dihydroxyspheroidene = spheroiden-2-one + H2O. The enzyme catalyses spirilloxanthin + 2 reduced [2Fe-2S]-[ferredoxin] + O2 + 2 H(+) = 2-hydroxyspirilloxanthin + 2 oxidized [2Fe-2S]-[ferredoxin] + H2O. It carries out the reaction 2-hydroxyspirilloxanthin + 2 reduced [2Fe-2S]-[ferredoxin] + O2 + 2 H(+) = 2,2-dihydroxyspirilloxanthin + 2 oxidized [2Fe-2S]-[ferredoxin] + H2O. It catalyses the reaction 2,2-dihydroxyspirilloxanthin = 2-oxospirilloxanthin + H2O. The catalysed reaction is 2-oxospirilloxanthin + 2 reduced [2Fe-2S]-[ferredoxin] + O2 + 2 H(+) = 2'-hydroxy-2-oxospirilloxanthin + 2 oxidized [2Fe-2S]-[ferredoxin] + H2O. The enzyme catalyses 2'-hydroxy-2-oxospirilloxanthin + 2 reduced [2Fe-2S]-[ferredoxin] + O2 + 2 H(+) = 2',2'-dihydroxy-2-oxospirilloxanthin + 2 oxidized [2Fe-2S]-[ferredoxin] + H2O. It carries out the reaction 2',2'-dihydroxy-2-oxospirilloxanthin = 2,2'-dioxospirilloxanthin + H2O. Its pathway is carotenoid biosynthesis; spheroidene biosynthesis. Involved in the biosynthesis of the carotenoid spheroidene. Catalyzes the introduction of one keto group at the C-2 position of spheroidene. In vitro, can also catalyze the introduction of two keto groups at the C-2 and C-2' positions of spirilloxanthin, but spirilloxanthin biosynthesis pathway is not present in R.capsulatus. In Rhodobacter capsulatus (strain ATCC BAA-309 / NBRC 16581 / SB1003), this protein is Spheroidene monooxygenase.